The following is a 286-amino-acid chain: Polyamine aminopropyltransferase (286 aa).

Residues 5 to 242 form the PABS domain; sequence DNWFTEVLEE…GWWSATLASK (238 aa). An S-methyl-5'-thioadenosine-binding site is contributed by Gln35. Spermidine is bound by residues His66 and Asp90. S-methyl-5'-thioadenosine-binding positions include Asp110 and 141-142; that span reads DG. The Proton acceptor role is filled by Asp160. 160–163 serves as a coordination point for spermidine; that stretch reads DSTD.

This sequence belongs to the spermidine/spermine synthase family. Homodimer or homotetramer.

Its subcellular location is the cytoplasm. The catalysed reaction is S-adenosyl 3-(methylsulfanyl)propylamine + putrescine = S-methyl-5'-thioadenosine + spermidine + H(+). The protein operates within amine and polyamine biosynthesis; spermidine biosynthesis; spermidine from putrescine: step 1/1. Its function is as follows. Catalyzes the irreversible transfer of a propylamine group from the amino donor S-adenosylmethioninamine (decarboxy-AdoMet) to putrescine (1,4-diaminobutane) to yield spermidine. The sequence is that of Polyamine aminopropyltransferase from Alkalilimnicola ehrlichii (strain ATCC BAA-1101 / DSM 17681 / MLHE-1).